Consider the following 312-residue polypeptide: Probable HTH-type transcriptional regulator LrhA (312 aa).

In terms of domain architecture, HTH lysR-type spans 11–68 (LDLDLLRTFVAVADLNTFAAAAAAVCRTQSAVSQQMQRLEQLVGKELFARHGRNKLLT). Positions 28–47 (FAAAAAAVCRTQSAVSQQMQ) form a DNA-binding region, H-T-H motif.

This sequence belongs to the LysR transcriptional regulatory family.

Not known, does not seem to act on the proton translocating NADH dehydrogenase genes (nuoA-N) which are part of the lrhA operon. In Escherichia coli (strain K12), this protein is Probable HTH-type transcriptional regulator LrhA (lrhA).